Consider the following 181-residue polypeptide: Shikimate kinase (181 aa).

17–22 contributes to the ATP binding site; it reads GAGKTT. Position 21 (threonine 21) interacts with Mg(2+). 3 residues coordinate substrate: aspartate 39, arginine 63, and glycine 85. Arginine 122 provides a ligand contact to ATP. Substrate is bound at residue arginine 141.

This sequence belongs to the shikimate kinase family. As to quaternary structure, monomer. Mg(2+) is required as a cofactor.

It is found in the cytoplasm. It carries out the reaction shikimate + ATP = 3-phosphoshikimate + ADP + H(+). It participates in metabolic intermediate biosynthesis; chorismate biosynthesis; chorismate from D-erythrose 4-phosphate and phosphoenolpyruvate: step 5/7. Catalyzes the specific phosphorylation of the 3-hydroxyl group of shikimic acid using ATP as a cosubstrate. The chain is Shikimate kinase from Trichormus variabilis (strain ATCC 29413 / PCC 7937) (Anabaena variabilis).